Reading from the N-terminus, the 506-residue chain is Subtilisin-like serine protease Cur l 4.0101 (506 aa).

Residues 1–15 form the signal peptide; sequence MKYSLIAALPALAAA. A propeptide spans 16-135 (removed in mature form); sequence SPTFSTETIH…IERDSEVRIL (120 aa). The region spanning 43–134 is the Inhibitor I9 domain; it reads SYMVVFKKHV…YIERDSEVRI (92 aa). The interval 59–79 is disordered; that stretch reads HDWVQSVHSKNTQERMELRKR. Positions 69 to 79 are enriched in basic and acidic residues; that stretch reads NTQERMELRKR. One can recognise a Peptidase S8 domain in the interval 147–453; sequence PWGLARISHR…GGSSNYTDII (307 aa). Catalysis depends on charge relay system residues D183 and H215. 2 N-linked (GlcNAc...) asparagine glycosylation sites follow: N245 and N285. S381 acts as the Charge relay system in catalysis. The N-linked (GlcNAc...) asparagine glycan is linked to N448. Positions 459–506 are cleaved as a propeptide — removed in mature form; that stretch reads TVKKAASKEEEKESEFRITIPSLSELEDDFEKAKESAGRKAHHVGGKL.

The protein belongs to the peptidase S8 family.

Functionally, serine protease. The chain is Subtilisin-like serine protease Cur l 4.0101 from Cochliobolus lunatus (Filamentous fungus).